The following is a 385-amino-acid chain: Initiation-specific alpha-1,6-mannosyltransferase (385 aa).

Residues 1–15 (MLQLREPQMVHKHLK) are Cytoplasmic-facing. The chain crosses the membrane as a helical; Signal-anchor for type II membrane protein span at residues 16-36 (LAVLGIVVIFTTYFIISSLSS). Over 37-385 (PTSTHKTEYN…KDDGMPEMEQ (349 aa)) the chain is Lumenal. The short motif at 189 to 191 (DID) is the DXD motif element.

This sequence belongs to the glycosyltransferase 32 family. Mn(2+) is required as a cofactor.

It localises to the endoplasmic reticulum membrane. Its subcellular location is the golgi apparatus membrane. It carries out the reaction Transfers an alpha-D-mannosyl residue from GDP-mannose into lipid-linked oligosaccharide, forming an alpha-(1-&gt;6)-D-mannosyl-D-mannose linkage.. Its function is as follows. Mannosyltransferase involved in outer chain elongation of asparagine-linked oligosaccharides of the type Man(9)GlcNAc(2). Adds the first alpha-1,6-mannose to the Man(8)GlcNAc(2) and Man(9)GlcNAc(2), but not Man(5)GlcNAc(2), endoplasmic reticulum intermediates. Represents the first enzymatic event required for synthesis of outer chain mannose linkages on yeast secretory proteins. N-glycan outer chain epitopes play a crucial role in the host-fungal interaction, virulence, and host immune response such as interleukin synthesis or phagocytosis by neutrophils. This chain is Initiation-specific alpha-1,6-mannosyltransferase, found in Candida albicans (strain SC5314 / ATCC MYA-2876) (Yeast).